The sequence spans 316 residues: Ribosomal protein L11 methyltransferase (316 aa).

4 residues coordinate S-adenosyl-L-methionine: threonine 157, glycine 178, aspartate 200, and asparagine 243.

This sequence belongs to the methyltransferase superfamily. PrmA family.

It localises to the cytoplasm. It carries out the reaction L-lysyl-[protein] + 3 S-adenosyl-L-methionine = N(6),N(6),N(6)-trimethyl-L-lysyl-[protein] + 3 S-adenosyl-L-homocysteine + 3 H(+). In terms of biological role, methylates ribosomal protein L11. The polypeptide is Ribosomal protein L11 methyltransferase (Streptococcus pneumoniae (strain 70585)).